A 163-amino-acid chain; its full sequence is MPKAPDCSELSDSCSLAGGTGRFSGPLHRAWRMMNFRQRMGWIGVGLYLLASAAAFYYVFEINETYNRLALEHILQHPEEPREGTTWTHSLKARLLSLPFWLWTIIFLIPYLQMFLFLYSCTRADPKTVGYCIIPICLAVICNRHQAFVKASNQISRLQLIDT.

2 helical membrane passes run 40–60 (MGWIGVGLYLLASAAAFYYVF) and 98–118 (LPFWLWTIIFLIPYLQMFLFL).

Belongs to the LYSET family. As to quaternary structure, interacts with GNPTAB; this interaction is important for proper localization of GNPTAB in Golgi stacks. Interacts with MBTPS1.

The protein localises to the golgi apparatus membrane. In terms of biological role, required for mannose-6-phosphate-dependent trafficking of lysosomal enzymes. LYSET bridges GlcNAc-1-phosphate transferase (GNPTAB), to the membrane-bound transcription factor site-1 protease (MBTPS1), thus allowing proteolytic activation of the GNPTAB. GNPTAB is involved in the regulation of M6P-dependent Golgi-to-lysosome trafficking of lysosomal enzymes. LYSET is thus an essential factor for maturation and delivery of lysosomal hydrolases. Plays an essential function for cells that depend on lysosomal catabolism to generate nutrients. This is Lysosomal enzyme trafficking factor (Lyset) from Mus musculus (Mouse).